The following is a 361-amino-acid chain: Protein phosphatase 1 regulatory subunit 7 (361 aa).

Positions 1–64 (MAAERGAGQQ…RGAEDPEEEH (64 aa)) are disordered. Residue alanine 2 is modified to N-acetylalanine. Serine 12, serine 24, serine 27, serine 45, and serine 48 each carry phosphoserine. Basic and acidic residues predominate over residues 17–34 (EVDRRVESEESGDEEGKK). The span at 48 to 58 (SLKDGVDRGAE) shows a compositional bias: basic and acidic residues. LRR repeat units lie at residues 78-99 (DAEDVDLTHYRIGKIEGLEVLK), 100-121 (KVKSLCLRQNLIKCIENLEELQ), 122-143 (SLRELDLYDNQIKKIENLEALT), 144-165 (ELEVLDISFNMLRNIEGIDKLT), 166-187 (QLKKLFLVNNKINKIENISNLH), 188-209 (QLQMLELGSNRIRAIENIDTLT), 210-231 (NLESLFLGKNKITKLQNLDALT), 232-253 (NLTVLSVQSNRLAKIEGLQSLV), 254-275 (NLRELYLSNNGIEVIEGLENNN), 276-297 (KLTMLDIASNRIKKIENISHLT), and 298-319 (ELQEFWMNDNLLESWSDLDELK). Position 323 is a phosphoserine (serine 323). The 30-residue stretch at 332–361 (NPLQKDPQYRRKVMLALPSVRQIDATYVRF) folds into the LRRCT domain.

It belongs to the SDS22 family. As to quaternary structure, interacts with PPP1CA, PPP1CB and PPP1CC/PPP1G. As to expression, widely expressed with high level in testis. Expression increases during puberty. Expressed in spermatids and probably also in spermatozoa.

Its subcellular location is the nucleus. Regulatory subunit of protein phosphatase 1. The sequence is that of Protein phosphatase 1 regulatory subunit 7 (Ppp1r7) from Mus musculus (Mouse).